The primary structure comprises 59 residues: UPF0434 protein VS_2060 (59 aa).

This sequence belongs to the UPF0434 family.

The protein is UPF0434 protein VS_2060 of Vibrio atlanticus (strain LGP32) (Vibrio splendidus (strain Mel32)).